The primary structure comprises 347 residues: NADH-ubiquinone oxidoreductase chain 2 (347 aa).

Helical transmembrane passes span 1 to 21 (MNPL…LITA), 25 to 45 (HWFL…PVLT), 55 to 75 (AAIK…MAIL), 96 to 116 (TMML…FWVP), 123 to 143 (TLMS…SIMY), 145 to 165 (IFPV…IMVG), 178 to 198 (ILAY…PYNP), 200 to 220 (ITIF…LALN), 237 to 257 (LTWL…LPPL), 274 to 294 (GTLI…YFYM), and 324 to 344 (FLLP…PLTF).

It belongs to the complex I subunit 2 family. Core subunit of respiratory chain NADH dehydrogenase (Complex I) which is composed of 45 different subunits. Interacts with TMEM242.

It localises to the mitochondrion inner membrane. It catalyses the reaction a ubiquinone + NADH + 5 H(+)(in) = a ubiquinol + NAD(+) + 4 H(+)(out). Functionally, core subunit of the mitochondrial membrane respiratory chain NADH dehydrogenase (Complex I) which catalyzes electron transfer from NADH through the respiratory chain, using ubiquinone as an electron acceptor. Essential for the catalytic activity and assembly of complex I. The sequence is that of NADH-ubiquinone oxidoreductase chain 2 from Hylobates lar (Lar gibbon).